Consider the following 108-residue polypeptide: UPF0060 membrane protein Sputw3181_1172 (108 aa).

The next 4 helical transmembrane spans lie at 3–23 (VITTLGLFIITAIAEIVGCYL), 31–51 (GASAWVLLPAAISLALFAWLL), 63–83 (AAYGGVYVTIAIVWLWGVDGI), and 87–107 (RWDLAGVVLMLAGMAVIMFAP).

The protein belongs to the UPF0060 family.

It is found in the cell inner membrane. This chain is UPF0060 membrane protein Sputw3181_1172, found in Shewanella sp. (strain W3-18-1).